We begin with the raw amino-acid sequence, 140 residues long: Tail assembly protein G (140 aa).

A disordered region spans residues 114–140 (IDEPTSSGEERNEPAEPVTAEKPSPVS).

Belongs to the lambda-like tail assembly protein family. As to quaternary structure, interacts with the tail assembly protein GT and the tape measure protein.

The protein resides in the host cytoplasm. Its function is as follows. Promotes tail assembly by creating a scaffold for the tail tube proteins. Tail assembly proteins G and GT probably wrap the linear tape measure protein to create a tail assembly scaffold. This allows the polymerization of the tail tube protein, during which G and GT are released, therefore they are absent in the mature virion. The tail assembly protein GT is produced by a rare -1 ribosomal frameshift. The ratio of translated G/GT is about 20, and this ratio is important for proper tail assembly. This Escherichia coli (Bacteriophage N15) protein is Tail assembly protein G.